We begin with the raw amino-acid sequence, 499 residues long: D-alanine--D-alanyl carrier protein ligase (499 aa).

152-153 (TS) serves as a coordination point for ATP. Asp197 serves as a coordination point for D-alanine. ATP is bound by residues 292–297 (NTYGPT), Asp372, 384–387 (YQGR), and Lys485. D-alanine is bound at residue Lys485.

This sequence belongs to the ATP-dependent AMP-binding enzyme family. DltA subfamily.

It localises to the cytoplasm. It carries out the reaction holo-[D-alanyl-carrier protein] + D-alanine + ATP = D-alanyl-[D-alanyl-carrier protein] + AMP + diphosphate. It functions in the pathway cell wall biogenesis; lipoteichoic acid biosynthesis. Its function is as follows. Catalyzes the first step in the D-alanylation of lipoteichoic acid (LTA), the activation of D-alanine and its transfer onto the D-alanyl carrier protein (Dcp) DltC. In an ATP-dependent two-step reaction, forms a high energy D-alanyl-AMP intermediate, followed by transfer of the D-alanyl residue as a thiol ester to the phosphopantheinyl prosthetic group of the Dcp. D-alanylation of LTA plays an important role in modulating the properties of the cell wall in Gram-positive bacteria, influencing the net charge of the cell wall. This is D-alanine--D-alanyl carrier protein ligase from Lactococcus lactis subsp. lactis (strain IL1403) (Streptococcus lactis).